A 1642-amino-acid chain; its full sequence is MATAIRDVGVWRQTRTLLLKNYLIKCRTKKSSVQEILFPLFFLFWLILVSMMHPNKKYEEVSDIELSPMDKFSLSNVILGYTPVTNITSSIMQRVSTDHLPKVIVTEEYANEKELVAASLSKSSNFVGVVFKDTMSYELRFFPEMIPVSSIYMNSREGCSKTCDAAQYWSLGFTVLQASIDAAIIQLKTNVSVWSELESTKAVIMGEAAVVEIDTFPRGVILIYLVIAFSPFGYFLAIHIVAEKEKKLKEFLKIMGLHDTAFWLSWVLLYASLIFLMSLLMAVIATASSLFPQSSSIVIFLLFFLYGLSSVFFALMLTPLFKKSKHVGVVEFFVTVVFGFVGLLIVLIESFPRSLVWLFSPLCQCAFLIGIAQVMHLEDFNEGALFSNLTEGPYPLIITIIMLALDSVFYVLLAVYLDQVIPGEFGLRRSSLYFLKPSYWSKNKRNYKELSEGNINGNISLNEIVEPVSSEFIGKEAIRISGIQKSYRKKTENVEALRNLSFDIYEGQITALLGHSGTGKSTLMNILCGLCPPSDGFASIYGHRVSEIDEMFEARKMIGICPQSDINFDVLTVEENLSILASIKGIPANNIIQEVQKVLLDLDMQAIKDNQAKKLSGGQKRKLSVGIAVLGNPKILLLDEPTAGMDPCSRHIVWNLLKYRKANRVTVFSTHFMDEADILADRKAVISQGMLKCVGSSIFLKSKWGIGYRLSMYIDRYCATESLSSLVRQHIPAAALLQQNDQQLVYSLPFKDMDKFSGLFSALDIHSNLGVISYGVSMTTLEDVFLKLEVEAEIDQADYSVFTQQPREEETDSKSFDEMEQSLLILSETKASSVSTMSLWKQQVSTIAKFHFLSLKRESKSVRAVLLLLLIFFAVQIFMFFLHHSFKNAVVPIKLVPDLYFLKPGDKPHKYKTSLLLQNSTDSDINGLIEFFAHQNIMVAMFNDSDYVSAAPHSAALNVVRSEKDYVFSAVFNSTMVYCLPVMMNIISNYYLYHLNVTEAIQTWSTPFIQEITDIVFKIELYFQAALLGIIVTAMPPYFAMENAENHKIKAYTQLKLSGLLPSAYWVGQAVVDIPLFFVVLILMLGSLFAFHHGLYFYPAKFLAVVFCLIAYVPSVILFTYIASFTFKKILNTKEFWSFIYSVTALACVAITETTFFLQYAVTAVFHYTFCIAIPIYPLLGCLISFIKGSWKNMPKNENTYNPWDRLLVAVIMPYLQCILWIFLLQHYEKIHGGRSIRKDPFFRALSQKAKNKKFPEPPINEDEDEDVKAERLKVKELMGCQCCEEKPAIMVCNLHKEYDDKKDFLHSRKTTKVATKYISFCVKKGEILGLLGPNGAGKSTVINTLVGDVEPTSGKIFLGDYGSHSSEDDESIKCMGYCPQTNPLWPDLTLQEHFEIYGAVKGMSPGDMKEVISRITKALDLKEHLQKTVKKLPAGIKRKLCFALSMLGNPQVTLLDEPSTGMDPRAKQHMWRAIRTAFKNKKRAALLTTHYMEEAEAVCDRVAIMVSGQLRCIGTVQHLKSKFGKGYFLEIKLKDWIENLEIDRLQREIQYIFPNASRQESFSSILAFKIPKEDVQSLSQSFAKLEEAKRTFAIEEYSFSQATLEQVFVELTKEQEEEDNSCGTLASTLWWERTQEDRVVF.

The helical transmembrane segment at 32-52 threads the bilayer; the sequence is SVQEILFPLFFLFWLILVSMM. Asn86 carries N-linked (GlcNAc...) asparagine glycosylation. The next 5 helical transmembrane spans lie at 220–240, 264–284, 297–317, 328–348, and 355–375; these read VILIYLVIAFSPFGYFLAIHI, LSWVLLYASLIFLMSLLMAVI, IVIFLLFFLYGLSSVFFALML, GVVEFFVTVVFGFVGLLIVLI, and LVWLFSPLCQCAFLIGIAQVM. N-linked (GlcNAc...) asparagine glycosylation is present at Asn388. The helical transmembrane segment at 396–416 threads the bilayer; it reads LIITIIMLALDSVFYVLLAVY. The N-linked (GlcNAc...) asparagine glycan is linked to Asn458. Positions 478–713 constitute an ABC transporter 1 domain; that stretch reads IRISGIQKSY…WGIGYRLSMY (236 aa). 514-521 contacts ATP; that stretch reads GHSGTGKS. A helical membrane pass occupies residues 864–884; sequence AVLLLLLIFFAVQIFMFFLHH. The N-linked (GlcNAc...) asparagine glycan is linked to Asn919. The helical transmembrane segment at 967 to 987 threads the bilayer; it reads VFSAVFNSTMVYCLPVMMNII. Asn996 carries N-linked (GlcNAc...) asparagine glycosylation. The next 6 helical transmembrane spans lie at 1021 to 1041, 1071 to 1091, 1102 to 1122, 1138 to 1158, 1164 to 1184, and 1207 to 1227; these read LYFQAALLGIIVTAMPPYFAM, VVDIPLFFVVLILMLGSLFAF, FLAVVFCLIAYVPSVILFTYI, SFIYSVTALACVAITETTFFL, AVFHYTFCIAIPIYPLLGCLI, and LLVAVIMPYLQCILWIFLLQH. The ABC transporter 2 domain maps to 1290-1533; sequence IMVCNLHKEY…FGKGYFLEIK (244 aa). 1333-1340 contacts ATP; the sequence is GPNGAGKS.

This sequence belongs to the ABC transporter superfamily. ABCA family. Post-translationally, N-glycosylated. As to expression, expressed in cardiomyocytes, oligodendrocytes and astrocytes in brain, alveolar type 2 cells in lung and follicular cells in the thyroid gland (at protein level). Detected in brain, testis, lung, heart, liver, kidney, skeletal muscle and placenta. Strongly expressed in the basal cells of the seminiferous tubules, interstitial cells consisting of Leydig cells, as well as the tunica albuginea. In the epididymis, specifically and very strongly expressed in the connective tissue outlining the cylindrical epithelium in the corpus and cauda regions, including fibrocytes and smooth muscle cells, as well as within the basal and tall columnar cells of the corpus cylindrical epithelium. Highly expressed in the brain with high expression in cortical and hippocampal neurons and moderately in the lung.

The protein localises to the golgi apparatus membrane. It is found in the lysosome membrane. Its subcellular location is the late endosome membrane. The protein resides in the cell membrane. The catalysed reaction is cholesterol(in) + ATP + H2O = cholesterol(out) + ADP + phosphate + H(+). In terms of biological role, cholesterol efflux transporter in macrophages that is responsible for APOAI/high-density lipoproteins (HDL) formation at the plasma membrane under high cholesterol levels and participates in reverse cholesterol transport. May play a role in the processing of autolysosomes. This Mus musculus (Mouse) protein is Cholesterol transporter ABCA5.